The chain runs to 332 residues: Ketol-acid reductoisomerase (NADP(+)) (332 aa).

In terms of domain architecture, KARI N-terminal Rossmann spans 1–182 (MATIYYEKDA…GCTRAGVLAT (182 aa)). NADP(+) contacts are provided by residues 25 to 28 (YGSQ), Arg48, Ser53, and 83 to 86 (DELQ). His108 is a catalytic residue. Residue Gly134 participates in NADP(+) binding. A KARI C-terminal knotted domain is found at 183–328 (TFKEETETDL…KELRSMMPWL (146 aa)). Residues Asp191, Glu195, Glu227, and Glu231 each contribute to the Mg(2+) site. Residue Ser252 coordinates substrate.

It belongs to the ketol-acid reductoisomerase family. Mg(2+) serves as cofactor.

The enzyme catalyses (2R)-2,3-dihydroxy-3-methylbutanoate + NADP(+) = (2S)-2-acetolactate + NADPH + H(+). The catalysed reaction is (2R,3R)-2,3-dihydroxy-3-methylpentanoate + NADP(+) = (S)-2-ethyl-2-hydroxy-3-oxobutanoate + NADPH + H(+). Its pathway is amino-acid biosynthesis; L-isoleucine biosynthesis; L-isoleucine from 2-oxobutanoate: step 2/4. The protein operates within amino-acid biosynthesis; L-valine biosynthesis; L-valine from pyruvate: step 2/4. Functionally, involved in the biosynthesis of branched-chain amino acids (BCAA). Catalyzes an alkyl-migration followed by a ketol-acid reduction of (S)-2-acetolactate (S2AL) to yield (R)-2,3-dihydroxy-isovalerate. In the isomerase reaction, S2AL is rearranged via a Mg-dependent methyl migration to produce 3-hydroxy-3-methyl-2-ketobutyrate (HMKB). In the reductase reaction, this 2-ketoacid undergoes a metal-dependent reduction by NADPH to yield (R)-2,3-dihydroxy-isovalerate. This is Ketol-acid reductoisomerase (NADP(+)) from Methanocella arvoryzae (strain DSM 22066 / NBRC 105507 / MRE50).